We begin with the raw amino-acid sequence, 968 residues long: RNA polymerase-associated protein RapA (968 aa).

A Helicase ATP-binding domain is found at 164–334; the sequence is EVGQRHAPRV…FARLRLLDPD (171 aa). 177–184 provides a ligand contact to ATP; the sequence is DEVGLGKT. The DEAH box signature appears at 280–283; the sequence is DEAH. A Helicase C-terminal domain is found at 490–644; that stretch reads RVEWLLNYLV…TCPTGRTIYD (155 aa).

This sequence belongs to the SNF2/RAD54 helicase family. RapA subfamily. As to quaternary structure, interacts with the RNAP. Has a higher affinity for the core RNAP than for the holoenzyme. Its ATPase activity is stimulated by binding to RNAP.

Its function is as follows. Transcription regulator that activates transcription by stimulating RNA polymerase (RNAP) recycling in case of stress conditions such as supercoiled DNA or high salt concentrations. Probably acts by releasing the RNAP, when it is trapped or immobilized on tightly supercoiled DNA. Does not activate transcription on linear DNA. Probably not involved in DNA repair. The protein is RNA polymerase-associated protein RapA of Yersinia pseudotuberculosis serotype O:1b (strain IP 31758).